Reading from the N-terminus, the 660-residue chain is ATPase WRNIP1 (660 aa).

The segment at 17-44 adopts a UBZ4-type zinc-finger fold; sequence QVQCPVCQQMMPAAHINSHLDRCLLLHP. 5 residues coordinate Zn(2+): Cys20, Cys23, His31, His35, and Cys39. The interval 50-191 is disordered; that stretch reads PAAGPHRAGE…DDPGHWDADA (142 aa). Ser65 and Ser75 each carry phosphoserine. The span at 76–89 shows a compositional bias: polar residues; sequence ESSALKQPATPTAA. Lys81 is covalently cross-linked (Glycyl lysine isopeptide (Lys-Gly) (interchain with G-Cter in ubiquitin)). The residue at position 85 (Thr85) is a Phosphothreonine. Phosphoserine occurs at positions 91 and 92. Positions 92 to 104 are enriched in acidic residues; that stretch reads SEGEGEEGDDGGE. Thr116 is modified (phosphothreonine). Low complexity predominate over residues 135-155; the sequence is ARKGLGKRPAAAAAAGSASPR. Residue Lys141 forms a Glycyl lysine isopeptide (Lys-Gly) (interchain with G-Cter in ubiquitin) linkage. Ser153 bears the Phosphoserine mark. Acidic residues predominate over residues 159 to 182; it reads ETEAQEEEEAGVDGDGDADVDGED. Residue Lys220 forms a Glycyl lysine isopeptide (Lys-Gly) (interchain with G-Cter in ubiquitin) linkage. 265 to 271 contacts ATP; sequence PGCGKTT. Glycyl lysine isopeptide (Lys-Gly) (interchain with G-Cter in ubiquitin) cross-links involve residues Lys296, Lys305, Lys311, Lys317, and Lys330. Residue Lys477 forms a Glycyl lysine isopeptide (Lys-Gly) (interchain with G-Cter in SUMO2); alternate linkage. Lys477 is covalently cross-linked (Glycyl lysine isopeptide (Lys-Gly) (interchain with G-Cter in ubiquitin); alternate). 2 positions are modified to phosphotyrosine: Tyr529 and Tyr557. Lys622 is covalently cross-linked (Glycyl lysine isopeptide (Lys-Gly) (interchain with G-Cter in ubiquitin)). Lys628 participates in a covalent cross-link: Glycyl lysine isopeptide (Lys-Gly) (interchain with G-Cter in ubiquitin); alternate. Lys628 carries the post-translational modification N6-acetyllysine; alternate. A Glycyl lysine isopeptide (Lys-Gly) (interchain with G-Cter in ubiquitin) cross-link involves residue Lys631.

The protein belongs to the AAA ATPase family. RarA/MGS1/WRNIP1 subfamily. In terms of assembly, forms homooligomers, possibly octamers. Directly interacts with POLD1, POLD2 and POLD4. Interacts with the N-terminal domain of WRN. Interacts (via UBZ4-type zinc finger) with monoubiquitin and polyubiquitin. Interacts with TRIM14 and PPP6C; these interactions positively regulate the RIGI signaling pathway. In terms of processing, sumoylated with SUMO1 and SUMO2/3. Ubiquitously expressed.

It localises to the nucleus. Its subcellular location is the cytoplasm. The catalysed reaction is ATP + H2O = ADP + phosphate + H(+). In terms of biological role, functions as a modulator of initiation or reinitiation events during DNA polymerase delta-mediated DNA synthesis. In the presence of ATP, stimulation of DNA polymerase delta-mediated DNA synthesis is decreased. Also plays a role in the innate immune defense against viruses. Stabilizes the RIGI dsRNA interaction and promotes RIGI 'Lys-63'-linked polyubiquitination. In turn, RIGI transmits the signal through mitochondrial MAVS. This chain is ATPase WRNIP1, found in Rattus norvegicus (Rat).